Here is a 161-residue protein sequence, read N- to C-terminus: Putative pre-16S rRNA nuclease (161 aa).

This sequence belongs to the YqgF nuclease family.

It is found in the cytoplasm. Its function is as follows. Could be a nuclease involved in processing of the 5'-end of pre-16S rRNA. The protein is Putative pre-16S rRNA nuclease of Bradyrhizobium diazoefficiens (strain JCM 10833 / BCRC 13528 / IAM 13628 / NBRC 14792 / USDA 110).